Reading from the N-terminus, the 303-residue chain is UDP-3-O-acyl-N-acetylglucosamine deacetylase (303 aa).

Histidine 78, histidine 237, and aspartate 241 together coordinate Zn(2+). Histidine 264 serves as the catalytic Proton donor.

Belongs to the LpxC family. Zn(2+) serves as cofactor.

It catalyses the reaction a UDP-3-O-[(3R)-3-hydroxyacyl]-N-acetyl-alpha-D-glucosamine + H2O = a UDP-3-O-[(3R)-3-hydroxyacyl]-alpha-D-glucosamine + acetate. The protein operates within glycolipid biosynthesis; lipid IV(A) biosynthesis; lipid IV(A) from (3R)-3-hydroxytetradecanoyl-[acyl-carrier-protein] and UDP-N-acetyl-alpha-D-glucosamine: step 2/6. Catalyzes the hydrolysis of UDP-3-O-myristoyl-N-acetylglucosamine to form UDP-3-O-myristoylglucosamine and acetate, the committed step in lipid A biosynthesis. This is UDP-3-O-acyl-N-acetylglucosamine deacetylase from Xanthomonas campestris pv. campestris (strain B100).